The sequence spans 101 residues: Movement protein (101 aa).

Residues 30-50 (EVAILSFVALICIYLLYLWVL) form a helical membrane-spanning segment.

Belongs to the mastrevirus movement protein family. In terms of assembly, interacts with the capsid protein (CP). Part of a MP-CP-viral DNA complex.

The protein resides in the host membrane. In terms of biological role, involved in the viral transport within, and between cells. The protein is Movement protein of Maize streak virus genotype D (isolate Raw) (MSV).